The following is a 655-amino-acid chain: Protein movement modulator (655 aa).

Topologically, residues 1–54 are extracellular; the sequence is MEQPSILVKILHSIPHVNYTFRRVNDTFNPDSDVYLEPTNNKLQCQQKGIELQS. N-linked (GlcNAc...) asparagine glycosylation is found at asparagine 18 and asparagine 25. Residues 55-75 traverse the membrane as a helical segment; it reads LVILASIPAGLLIGSLLGLLL. Over 76–95 the chain is Cytoplasmic; it reads YLLTRCCDRRQRKPSAQRCQ. The helical transmembrane segment at 96 to 116 threads the bilayer; that stretch reads SCSLVIITLMTCAAIGLGLYG. Over 117–231 the chain is Extracellular; that stretch reads NDDFHNGLLQ…GEFYESIRWP (115 aa). Asparagine 171, asparagine 188, and asparagine 211 each carry an N-linked (GlcNAc...) asparagine glycan. A helical transmembrane segment spans residues 232-252; the sequence is ATLAFLTVLLLLCTVLVIGVA. Over 253 to 258 the chain is Cytoplasmic; that stretch reads RRSRCT. Residues 259–279 traverse the membrane as a helical segment; that stretch reads LIFFSVSGLFCIIICWLLAGV. At 280–401 the chain is on the extracellular side; it reads YLASSVAAGD…ALRGLCGGGL (122 aa). Residues asparagine 326 and asparagine 372 are each glycosylated (N-linked (GlcNAc...) asparagine). A helical membrane pass occupies residues 402 to 422; that stretch reads LGLSLMMVAGLLTSFLLTILV. Residues 423–655 lie on the Cytoplasmic side of the membrane; sequence YADSHAWIYL…CKTLESNDFY (233 aa). The disordered stretch occupies residues 446–576; the sequence is APLFPASNAP…NNHYNNTQHR (131 aa). The span at 450–464 shows a compositional bias: low complexity; it reads PASNAPSASISPTAP. The span at 465–480 shows a compositional bias: polar residues; the sequence is LSTGTINRTLLHHQQA. Over residues 482-509 the composition is skewed to gly residues; the sequence is SGGGSGTLPGSGGGAGAGGGVGANGHNG. 2 stretches are compositionally biased toward low complexity: residues 526 to 539 and 546 to 576; these read SPSS…STAT and SYHN…TQHR. Residues serine 597 and serine 599 each carry the phosphoserine modification.

Belongs to the tweety family.

The protein resides in the cell membrane. The enzyme catalyses chloride(in) = chloride(out). Functionally, probable large-conductance Ca(2+)-activated chloride channel. Modulator of embryonic movement. In Drosophila melanogaster (Fruit fly), this protein is Protein movement modulator.